A 45-amino-acid polypeptide reads, in one-letter code: Large ribosomal subunit protein bL34 (45 aa).

The segment at 1 to 45 is disordered; it reads MTKRTFGGTSRKRKRVSGFRVRMRTHTGRSVIRSRRKKGRSRIAV. The segment covering 10-45 has biased composition (basic residues); it reads SRKRKRVSGFRVRMRTHTGRSVIRSRRKKGRSRIAV.

It belongs to the bacterial ribosomal protein bL34 family.

The protein is Large ribosomal subunit protein bL34 of Prochlorococcus marinus (strain SARG / CCMP1375 / SS120).